We begin with the raw amino-acid sequence, 247 residues long: NH(3)-dependent NAD(+) synthetase (247 aa).

Residue 29–36 participates in ATP binding; sequence GISGGIDS. Asp-35 provides a ligand contact to Mg(2+). Arg-120 contributes to the deamido-NAD(+) binding site. Thr-140 serves as a coordination point for ATP. Glu-145 serves as a coordination point for Mg(2+). Residues Lys-153 and Asp-160 each contribute to the deamido-NAD(+) site. The ATP site is built by Lys-169 and Ser-191. 237 to 238 is a binding site for deamido-NAD(+); that stretch reads HK.

It belongs to the NAD synthetase family. In terms of assembly, homodimer.

The enzyme catalyses deamido-NAD(+) + NH4(+) + ATP = AMP + diphosphate + NAD(+) + H(+). It participates in cofactor biosynthesis; NAD(+) biosynthesis; NAD(+) from deamido-NAD(+) (ammonia route): step 1/1. Catalyzes the ATP-dependent amidation of deamido-NAD to form NAD. Uses ammonia as a nitrogen source. The polypeptide is NH(3)-dependent NAD(+) synthetase (Alkaliphilus metalliredigens (strain QYMF)).